Consider the following 476-residue polypeptide: Tubulointerstitial nephritis antigen (476 aa).

The N-linked (GlcNAc...) asparagine glycan is linked to Asn38. The region spanning 59–107 is the SMB domain; sequence RFGCCADRDDGCVTQFYEADALCYCDKFCERENSDCCPDYKSFCREEKG. Disulfide bonds link Cys63-Cys83 and Cys87-Cys94. Asn175, Asn314, Asn360, and Asn455 each carry an N-linked (GlcNAc...) asparagine glycan.

This sequence belongs to the peptidase C1 family.

It localises to the secreted. Its subcellular location is the extracellular space. The protein resides in the extracellular matrix. The protein localises to the basement membrane. Its function is as follows. Mediates adhesion of proximal tubule epithelial cells via integrins alpha3-beta1 and alphaV-beta3. This is a non catalytic peptidase C1 family protein. This is Tubulointerstitial nephritis antigen (TINAG) from Bos taurus (Bovine).